The sequence spans 37 residues: Omega-sparatoxin-Hv1a (37 aa).

3 disulfide bridges follow: cysteine 4–cysteine 18, cysteine 11–cysteine 23, and cysteine 17–cysteine 33.

As to expression, expressed by the venom gland.

The protein localises to the secreted. Functionally, blocks calcium channels (Cav). The sequence is that of Omega-sparatoxin-Hv1a from Heteropoda venatoria (Brown huntsman spider).